A 597-amino-acid chain; its full sequence is 2-succinyl-5-enolpyruvyl-6-hydroxy-3-cyclohexene-1-carboxylate synthase (597 aa).

It belongs to the TPP enzyme family. MenD subfamily. Homodimer. Mg(2+) serves as cofactor. The cofactor is Mn(2+). It depends on thiamine diphosphate as a cofactor.

It carries out the reaction isochorismate + 2-oxoglutarate + H(+) = 5-enolpyruvoyl-6-hydroxy-2-succinyl-cyclohex-3-ene-1-carboxylate + CO2. It functions in the pathway quinol/quinone metabolism; 1,4-dihydroxy-2-naphthoate biosynthesis; 1,4-dihydroxy-2-naphthoate from chorismate: step 2/7. The protein operates within cofactor biosynthesis; phylloquinone biosynthesis. Catalyzes the thiamine diphosphate-dependent decarboxylation of 2-oxoglutarate and the subsequent addition of the resulting succinic semialdehyde-thiamine pyrophosphate anion to isochorismate to yield 2-succinyl-5-enolpyruvyl-6-hydroxy-3-cyclohexene-1-carboxylate (SEPHCHC). This Synechococcus sp. (strain JA-3-3Ab) (Cyanobacteria bacterium Yellowstone A-Prime) protein is 2-succinyl-5-enolpyruvyl-6-hydroxy-3-cyclohexene-1-carboxylate synthase.